The chain runs to 396 residues: 1-deoxy-D-xylulose 5-phosphate reductoisomerase (396 aa).

Residues Thr-15, Gly-16, Ser-17, Ile-18, Gly-41, and Asn-130 each coordinate NADPH. Position 131 (Lys-131) interacts with 1-deoxy-D-xylulose 5-phosphate. NADPH is bound at residue Glu-132. Asp-155 lines the Mn(2+) pocket. Positions 156, 157, 181, and 204 each coordinate 1-deoxy-D-xylulose 5-phosphate. Glu-157 is a binding site for Mn(2+). Gly-210 is a binding site for NADPH. Ser-217, Asn-222, Lys-223, and Glu-226 together coordinate 1-deoxy-D-xylulose 5-phosphate. Residue Glu-226 participates in Mn(2+) binding.

The protein belongs to the DXR family. Mg(2+) serves as cofactor. It depends on Mn(2+) as a cofactor.

It catalyses the reaction 2-C-methyl-D-erythritol 4-phosphate + NADP(+) = 1-deoxy-D-xylulose 5-phosphate + NADPH + H(+). It participates in isoprenoid biosynthesis; isopentenyl diphosphate biosynthesis via DXP pathway; isopentenyl diphosphate from 1-deoxy-D-xylulose 5-phosphate: step 1/6. Catalyzes the NADPH-dependent rearrangement and reduction of 1-deoxy-D-xylulose-5-phosphate (DXP) to 2-C-methyl-D-erythritol 4-phosphate (MEP). In Bifidobacterium longum (strain DJO10A), this protein is 1-deoxy-D-xylulose 5-phosphate reductoisomerase.